The following is a 455-amino-acid chain: Lysine histidine transporter-like 4 (455 aa).

Over 1–38 the chain is Cytoplasmic; the sequence is MAGIPDHIQDQHLVEEDQPFDLEDWLPITASRNANWYY. Residues 39–59 traverse the membrane as a helical segment; sequence SAFHNVTAIVGAGVLGLPYAM. Residues 60–61 are Extracellular-facing; it reads SE. A helical membrane pass occupies residues 62–82; that stretch reads LGWGPGVVVLILSWVITLYTL. The Cytoplasmic segment spans residues 83–113; it reads WQMIEMHEMFEGQRFDRYHELGQAAFGKKLG. The helical transmembrane segment at 114 to 134 threads the bilayer; the sequence is LYIIVPLQLLVEISVCIVYMV. At 135 to 158 the chain is on the extracellular side; that stretch reads TGGKSLKNVHDLALGDGDKCTKLR. The helical transmembrane segment at 159-179 threads the bilayer; it reads IQHFILIFASSQFVLSLLKNF. The Cytoplasmic portion of the chain corresponds to 180–181; it reads NS. Residues 182–202 form a helical membrane-spanning segment; it reads ISGVSLVAAVMSVSYSTIAWV. The Extracellular portion of the chain corresponds to 203 to 226; that stretch reads ASLRKGATTGSVEYGYRKRTTSVP. Residues 227–247 form a helical membrane-spanning segment; it reads LAFLSALGEMAFAYAGHNVVL. The Cytoplasmic segment spans residues 248 to 267; sequence EIQATIPSTPENPSKRPMWK. The helical transmembrane segment at 268–288 threads the bilayer; sequence GAVVAYIIVAFCYFPVALVGF. The Extracellular segment spans residues 289–307; the sequence is KTFGNSVEESILESLTKPT. Residues 308–328 traverse the membrane as a helical segment; the sequence is ALVIVANMFVVIHLLGSYQVY. Topologically, residues 329-357 are cytoplasmic; that stretch reads AMPVFDMIESVMIRIWHFSPTRVLRFTIR. Residues 358–378 form a helical membrane-spanning segment; the sequence is WTFVAATMGIAVGLPYYSALL. A topological domain (extracellular) is located at residue S379. The helical transmembrane segment at 380-400 threads the bilayer; the sequence is FFGGFVFAPTTYFIPCIMWLI. At 401 to 412 the chain is on the cytoplasmic side; it reads LKKPKRFSLSWC. The helical transmembrane segment at 413-433 threads the bilayer; it reads MNWFCIIFGLVLMIIAPIGGL. Topologically, residues 434 to 455 are extracellular; it reads AKLIYNIQKGTLPNSRCNLPKH.

The protein belongs to the amino acid/polyamine transporter 2 family. Amino acid/auxin permease (AAAP) (TC 2.A.18.2) subfamily.

It localises to the cell membrane. Functionally, amino acid transporter. This chain is Lysine histidine transporter-like 4, found in Arabidopsis thaliana (Mouse-ear cress).